The primary structure comprises 90 residues: Small ribosomal subunit protein bS16 (90 aa).

It belongs to the bacterial ribosomal protein bS16 family.

This is Small ribosomal subunit protein bS16 from Bacillus licheniformis (strain ATCC 14580 / DSM 13 / JCM 2505 / CCUG 7422 / NBRC 12200 / NCIMB 9375 / NCTC 10341 / NRRL NRS-1264 / Gibson 46).